Reading from the N-terminus, the 249-residue chain is Fasciclin-like arabinogalactan protein 12 (249 aa).

Positions 1 to 24 (MEHSLIILLFTVLLLLTTTPGILS) are cleaved as a signal peptide. The 145-residue stretch at 37 to 181 (PTNVTKILEK…LAVYQVDKVL (145 aa)) folds into the FAS1 domain. Residues Asn-39, Asn-71, Asn-143, Asn-152, and Asn-159 are each glycosylated (N-linked (GlcNAc...) asparagine). Positions 186-219 (VFDPRPPAPAPAPSVSKSKKKKDDSDSSSDDSPA) are disordered. Asp-220 is lipidated: GPI-anchor amidated aspartate. The propeptide at 221 to 249 (ASFALRNVGSVCDAVSFCVMSVMLAWFYL) is removed in mature form.

This sequence belongs to the fasciclin-like AGP family.

It localises to the cell membrane. May be a cell surface adhesion protein. The protein is Fasciclin-like arabinogalactan protein 12 (FLA12) of Arabidopsis thaliana (Mouse-ear cress).